Consider the following 90-residue polypeptide: MAYFVPSIVFNGLKSNDKEPLGNFDSSMSPSSYDITVWISSLSKKIASVFINVSLSVKVVTLPKPIDLTLPVGNLIFAFTTKKGWVKLSL.

Its subcellular location is the mitochondrion. This is an uncharacterized protein from Ascobolus immersus.